Here is a 157-residue protein sequence, read N- to C-terminus: Small ribosomal subunit protein uS7 (157 aa).

The protein belongs to the universal ribosomal protein uS7 family. In terms of assembly, part of the 30S ribosomal subunit. Contacts proteins S9 and S11.

Its function is as follows. One of the primary rRNA binding proteins, it binds directly to 16S rRNA where it nucleates assembly of the head domain of the 30S subunit. Is located at the subunit interface close to the decoding center, probably blocks exit of the E-site tRNA. This Leptospira biflexa serovar Patoc (strain Patoc 1 / Ames) protein is Small ribosomal subunit protein uS7.